The following is a 378-amino-acid chain: Quinolinate synthase (378 aa).

Residues His-59 and Ser-80 each contribute to the iminosuccinate site. Position 125 (Cys-125) interacts with [4Fe-4S] cluster. Residues 151–153 and Ser-168 each bind iminosuccinate; that span reads YAN. Residue Cys-212 participates in [4Fe-4S] cluster binding. Residues 238–240 and Thr-255 contribute to the iminosuccinate site; that span reads HPE. A [4Fe-4S] cluster-binding site is contributed by Cys-309.

Belongs to the quinolinate synthase family. Type 1 subfamily. [4Fe-4S] cluster is required as a cofactor.

Its subcellular location is the cytoplasm. It catalyses the reaction iminosuccinate + dihydroxyacetone phosphate = quinolinate + phosphate + 2 H2O + H(+). It functions in the pathway cofactor biosynthesis; NAD(+) biosynthesis; quinolinate from iminoaspartate: step 1/1. Functionally, catalyzes the condensation of iminoaspartate with dihydroxyacetone phosphate to form quinolinate. The chain is Quinolinate synthase from Burkholderia cenocepacia (strain HI2424).